The primary structure comprises 270 residues: UPF0246 protein Psyc_0554 (270 aa).

Belongs to the UPF0246 family.

This is UPF0246 protein Psyc_0554 from Psychrobacter arcticus (strain DSM 17307 / VKM B-2377 / 273-4).